The chain runs to 565 residues: Mannosyl-oligosaccharide 1,2-alpha-mannosidase (565 aa).

Cysteine 320 and cysteine 363 are joined by a disulfide. The active-site Proton donor is the glutamate 378. Residue threonine 501 coordinates Ca(2+). Composition is skewed to basic and acidic residues over residues 526 to 538 (NEKAQMRESKVID) and 550 to 565 (KSADQEAKEIIEEIAG). The segment at 526 to 565 (NEKAQMRESKVIDKSNLPEAQPVDKSADQEAKEIIEEIAG) is disordered.

The protein belongs to the glycosyl hydrolase 47 family. Requires Ca(2+) as cofactor.

It catalyses the reaction N(4)-(alpha-D-Man-(1-&gt;2)-alpha-D-Man-(1-&gt;2)-alpha-D-Man-(1-&gt;3)-[alpha-D-Man-(1-&gt;2)-alpha-D-Man-(1-&gt;3)-[alpha-D-Man-(1-&gt;2)-alpha-D-Man-(1-&gt;6)]-alpha-D-Man-(1-&gt;6)]-beta-D-Man-(1-&gt;4)-beta-D-GlcNAc-(1-&gt;4)-beta-D-GlcNAc)-L-asparaginyl-[protein] (N-glucan mannose isomer 9A1,2,3B1,2,3) + 4 H2O = N(4)-(alpha-D-Man-(1-&gt;3)-[alpha-D-Man-(1-&gt;3)-[alpha-D-Man-(1-&gt;6)]-alpha-D-Man-(1-&gt;6)]-beta-D-Man-(1-&gt;4)-beta-D-GlcNAc-(1-&gt;4)-beta-D-GlcNAc)-L-asparaginyl-[protein] (N-glucan mannose isomer 5A1,2) + 4 beta-D-mannose. The enzyme catalyses N(4)-(alpha-D-Man-(1-&gt;2)-alpha-D-Man-(1-&gt;2)-alpha-D-Man-(1-&gt;3)-[alpha-D-Man-(1-&gt;3)-[alpha-D-Man-(1-&gt;2)-alpha-D-Man-(1-&gt;6)]-alpha-D-Man-(1-&gt;6)]-beta-D-Man-(1-&gt;4)-beta-D-GlcNAc-(1-&gt;4)-beta-D-GlcNAc)-L-asparaginyl-[protein] (N-glucan mannose isomer 8A1,2,3B1,3) + 3 H2O = N(4)-(alpha-D-Man-(1-&gt;3)-[alpha-D-Man-(1-&gt;3)-[alpha-D-Man-(1-&gt;6)]-alpha-D-Man-(1-&gt;6)]-beta-D-Man-(1-&gt;4)-beta-D-GlcNAc-(1-&gt;4)-beta-D-GlcNAc)-L-asparaginyl-[protein] (N-glucan mannose isomer 5A1,2) + 3 beta-D-mannose. The protein operates within protein modification; protein glycosylation. Involved in the maturation of Asn-linked oligosaccharides. Trim a single alpha-1,2-linked mannose residue from Man(9)GlcNAc(2) to produce Man(8)GlcNAc(2). This Candida albicans (Yeast) protein is Mannosyl-oligosaccharide 1,2-alpha-mannosidase (MNS1).